The sequence spans 381 residues: Metacaspase-8 (381 aa).

Residues His-86 and Cys-140 contribute to the active site. Cys-140 carries the post-translational modification S-nitrosocysteine.

This sequence belongs to the peptidase C14B family. In terms of processing, proteolytically processed; by an autocatalytic mechanism.

Its function is as follows. Cysteine protease that cleaves specifically after arginine residues. Does not cleave caspase-specific substrates. May be involved in the modulation of programmed cell death activated by oxidative stress. In Arabidopsis thaliana (Mouse-ear cress), this protein is Metacaspase-8 (AMC8).